Here is a 547-residue protein sequence, read N- to C-terminus: Glutamyl-tRNA(Gln) amidotransferase subunit B, mitochondrial (547 aa).

It belongs to the GatB/GatE family. GatB subfamily. In terms of assembly, subunit of the heterotrimeric GatFAB amidotransferase (AdT) complex, composed of A, B and F subunits.

The protein localises to the mitochondrion. It catalyses the reaction L-glutamyl-tRNA(Gln) + L-glutamine + ATP + H2O = L-glutaminyl-tRNA(Gln) + L-glutamate + ADP + phosphate + H(+). In terms of biological role, allows the formation of correctly charged Gln-tRNA(Gln) through the transamidation of misacylated Glu-tRNA(Gln) in the mitochondria. The reaction takes place in the presence of glutamine and ATP through an activated gamma-phospho-Glu-tRNA(Gln). In Lachancea thermotolerans (strain ATCC 56472 / CBS 6340 / NRRL Y-8284) (Yeast), this protein is Glutamyl-tRNA(Gln) amidotransferase subunit B, mitochondrial.